Reading from the N-terminus, the 667-residue chain is mRNA cap guanine-N(7) methyltransferase (667 aa).

Residues 1–19 (MYDPARDSWEERDGDEARS) show a composition bias toward basic and acidic residues. Residues 1–272 (MYDPARDSWE…RRRQEERERA (272 aa)) are disordered. The span at 33–52 (FSSSEQIYGASGENNNTTDL) shows a compositional bias: polar residues. Residues 72–87 (SPPAQSTTQTPPSIST) show a composition bias toward low complexity. Over residues 88-128 (HVQSPVNPAAQEASNTQSLTSAAQNQSNKSTTTMDNTSGSA) the composition is skewed to polar residues. Over residues 132–142 (PRADPSDKSNR) the composition is skewed to basic and acidic residues. The segment covering 147 to 156 (ASPTDQNGSQ) has biased composition (polar residues). Positions 256–272 (LVDRETLRRRQEERERA) are enriched in basic and acidic residues. Residues 309–667 (SKIKGLRSFN…FYHAFCFYKV (359 aa)) form the mRNA cap 0 methyltransferase domain. 318-319 (NN) lines the mRNA pocket. S-adenosyl-L-methionine contacts are provided by residues Lys-322, Gly-365, Asp-389, Asp-427, 470–472 (MFT), and Tyr-475. Over residues 521–535 (KKERQSQAKKEKTDE) the composition is skewed to basic and acidic residues. Residues 521-547 (KKERQSQAKKEKTDEAPEDGEVEEDDG) are disordered. The segment covering 536 to 547 (APEDGEVEEDDG) has biased composition (acidic residues).

Belongs to the class I-like SAM-binding methyltransferase superfamily. mRNA cap 0 methyltransferase family.

Its subcellular location is the nucleus. The catalysed reaction is a 5'-end (5'-triphosphoguanosine)-ribonucleoside in mRNA + S-adenosyl-L-methionine = a 5'-end (N(7)-methyl 5'-triphosphoguanosine)-ribonucleoside in mRNA + S-adenosyl-L-homocysteine. Responsible for methylating the 5'-cap structure of mRNAs. The polypeptide is mRNA cap guanine-N(7) methyltransferase (abd1) (Neosartorya fischeri (strain ATCC 1020 / DSM 3700 / CBS 544.65 / FGSC A1164 / JCM 1740 / NRRL 181 / WB 181) (Aspergillus fischerianus)).